The following is a 279-amino-acid chain: Undecaprenyl-diphosphatase (279 aa).

The next 8 helical transmembrane spans lie at 2–22 (LFIE…TEWL), 44–64 (AFME…VIVI), 85–105 (WQLW…AVPL), 113–133 (FNHM…FLWI), 163–183 (VLSI…AIIL), 188–208 (TVAA…YSGL), 225–245 (LLVL…VIKL), and 255–275 (FTVF…YSVF).

It belongs to the UppP family.

It is found in the cell membrane. It catalyses the reaction di-trans,octa-cis-undecaprenyl diphosphate + H2O = di-trans,octa-cis-undecaprenyl phosphate + phosphate + H(+). Its function is as follows. Catalyzes the dephosphorylation of undecaprenyl diphosphate (UPP). Confers resistance to bacitracin. The chain is Undecaprenyl-diphosphatase from Streptococcus equi subsp. zooepidemicus (strain H70).